Here is a 677-residue protein sequence, read N- to C-terminus: Glutamine--fructose-6-phosphate aminotransferase [isomerizing] 1 (677 aa).

Catalysis depends on Cys2, which acts as the Nucleophile. The region spanning 2–269 (CGIFAYLNFH…DGEVVNLKDG (268 aa)) is the Glutamine amidotransferase type-2 domain. 2 SIS domains span residues 353–492 (HLKT…DTIS) and 524–667 (LAQL…VDQP). Substrate is bound by residues 370–371 (TS), 415–417 (SQS), Thr420, and His571.

In terms of assembly, homotetramer, may also exist as homodimers. In terms of tissue distribution, highly expressed in flowers specifically in mature anthers, mature pollen grains and pollen tubes. Barely observed in roots, leaves and stems.

The enzyme catalyses D-fructose 6-phosphate + L-glutamine = D-glucosamine 6-phosphate + L-glutamate. The protein operates within nucleotide-sugar biosynthesis; UDP-N-acetyl-alpha-D-glucosamine biosynthesis; alpha-D-glucosamine 6-phosphate from D-fructose 6-phosphate: step 1/1. Its function is as follows. Controls the flux of glucose into the hexosamine biosynthetic pathway (HBP) leading to glucosamine (GlcN) content homeostasis. Involved in regulating the availability of precursors for N- and O-linked glycosylation of proteins. Required during pollen maturation and pollen tube formation by triggering polar deposition of pectin and callose in the pollen cell wall. Promotes tolerance to tunicamycin (Tm), an inhibitor of proteins N-glycosylation in endoplasmic reticulum (ER). The polypeptide is Glutamine--fructose-6-phosphate aminotransferase [isomerizing] 1 (Arabidopsis thaliana (Mouse-ear cress)).